The sequence spans 531 residues: Fe-S cluster assembly factor HCF101, chloroplastic (531 aa).

The transit peptide at 1 to 62 (MRNLRAAAPA…PRRVGRLRRR (62 aa)) directs the protein to the chloroplast. Pro residues predominate over residues 17–27 (APPLLLPPSTP). Residues 17 to 37 (APPLLLPPSTPTPRGAFSAKA) are disordered. A compositionally biased stretch (low complexity) spans 28–37 (TPRGAFSAKA). 181 to 188 (CKGGVGKS) is an ATP binding site.

It belongs to the Mrp/NBP35 ATP-binding proteins family. [4Fe-4S] cluster is required as a cofactor.

It is found in the plastid. Its subcellular location is the chloroplast stroma. Required for photosystem I (PSI) biosynthesis and assembly. May serve as a chloroplast scaffold protein that specifically assembles iron-sulfur (4Fe-4S) clusters and transfers them to the chloroplast PSI and ferredoxin-thioredoxin (FTR) complexes. Probably not required for assembly or stability of plastidic 2Fe-2S clusters. The sequence is that of Fe-S cluster assembly factor HCF101, chloroplastic (HCF101) from Oryza sativa subsp. japonica (Rice).